A 101-amino-acid polypeptide reads, in one-letter code: Small ribosomal subunit protein uS14 (101 aa).

Belongs to the universal ribosomal protein uS14 family. Part of the 30S ribosomal subunit. Contacts proteins S3 and S10.

In terms of biological role, binds 16S rRNA, required for the assembly of 30S particles and may also be responsible for determining the conformation of the 16S rRNA at the A site. In Novosphingobium aromaticivorans (strain ATCC 700278 / DSM 12444 / CCUG 56034 / CIP 105152 / NBRC 16084 / F199), this protein is Small ribosomal subunit protein uS14.